Consider the following 291-residue polypeptide: Maintenance of mitochondrial morphology protein 1 (291 aa).

The Lumenal portion of the chain corresponds to 1–16 (MPNNYVFSLQPTFTQG). A helical membrane pass occupies residues 17–37 (LILGQLSILVLLGMILKFLFL). Topologically, residues 38–291 (DSTQHPFESS…KKEMSDADLS (254 aa)) are cytoplasmic. The SMP-LTD domain occupies 73-277 (NAESAEWFNV…LPGLASVVDV (205 aa)).

This sequence belongs to the MMM1 family. As to quaternary structure, homodimer. Component of the ER-mitochondria encounter structure (ERMES) or MDM complex, composed of MMM1, MDM10, MDM12 and MDM34. An MMM1 homodimer associates with one molecule of MDM12 on each side in a pairwise head-to-tail manner, and the SMP-LTD domains of MMM1 and MDM12 generate a continuous hydrophobic tunnel for phospholipid trafficking.

Its subcellular location is the endoplasmic reticulum membrane. Functionally, component of the ERMES/MDM complex, which serves as a molecular tether to connect the endoplasmic reticulum (ER) and mitochondria. Components of this complex are involved in the control of mitochondrial shape and protein biogenesis, and function in nonvesicular lipid trafficking between the ER and mitochondria. The MDM12-MMM1 subcomplex functions in the major beta-barrel assembly pathway that is responsible for biogenesis of all outer membrane beta-barrel proteins, and acts in a late step after the SAM complex. The MDM10-MDM12-MMM1 subcomplex further acts in the TOM40-specific pathway after the action of the MDM12-MMM1 complex. Essential for establishing and maintaining the structure of mitochondria and maintenance of mtDNA nucleoids. The chain is Maintenance of mitochondrial morphology protein 1 from Laccaria bicolor (strain S238N-H82 / ATCC MYA-4686) (Bicoloured deceiver).